A 139-amino-acid chain; its full sequence is Protein cornichon homolog 4 (139 aa).

Transmembrane regions (helical) follow at residues 5–25 (VFVF…YFII), 57–77 (IVTV…NLPV), and 118–138 (LGFH…ALIN).

It belongs to the cornichon family. Interacts with Sec23/24 complex components SEC24B and SEC24D. Interacts with CCR5. Interacts with ADRB2 in the early secretory pathway.

It localises to the membrane. It is found in the endoplasmic reticulum. The protein resides in the endoplasmic reticulum-Golgi intermediate compartment. Functionally, involved in G protein-coupled receptors (GPCRs) trafficking from the endoplasmic reticulum to the cell surface; it promotes the exit of GPCRs from the early secretory pathway, likely through interaction with the COPII machinery. The sequence is that of Protein cornichon homolog 4 (CNIH4) from Homo sapiens (Human).